A 546-amino-acid chain; its full sequence is Chaperonin GroEL (546 aa).

Residues 30–33 (TLGP), lysine 51, 87–91 (DGTTT), glycine 415, and aspartate 495 each bind ATP.

It belongs to the chaperonin (HSP60) family. In terms of assembly, forms a cylinder of 14 subunits composed of two heptameric rings stacked back-to-back. Interacts with the co-chaperonin GroES.

The protein localises to the cytoplasm. It carries out the reaction ATP + H2O + a folded polypeptide = ADP + phosphate + an unfolded polypeptide.. Functionally, together with its co-chaperonin GroES, plays an essential role in assisting protein folding. The GroEL-GroES system forms a nano-cage that allows encapsulation of the non-native substrate proteins and provides a physical environment optimized to promote and accelerate protein folding. This Brucella anthropi (strain ATCC 49188 / DSM 6882 / CCUG 24695 / JCM 21032 / LMG 3331 / NBRC 15819 / NCTC 12168 / Alc 37) (Ochrobactrum anthropi) protein is Chaperonin GroEL.